Here is a 96-residue protein sequence, read N- to C-terminus: Small ribosomal subunit protein bS6 (96 aa).

The protein belongs to the bacterial ribosomal protein bS6 family.

Functionally, binds together with bS18 to 16S ribosomal RNA. The polypeptide is Small ribosomal subunit protein bS6 (Salinispora tropica (strain ATCC BAA-916 / DSM 44818 / JCM 13857 / NBRC 105044 / CNB-440)).